Reading from the N-terminus, the 393-residue chain is Prokineticin receptor 1 (393 aa).

The Extracellular segment spans residues 1-62 (METTMGFMDD…TNSRTFFAAK (62 aa)). N-linked (GlcNAc...) asparagine glycans are attached at residues asparagine 11, asparagine 14, and asparagine 36. Residues 63–83 (IVIGMALVGIMLVCGIGNFIF) form a helical membrane-spanning segment. Topologically, residues 84-98 (IAALVRYKKLRNLTN) are cytoplasmic. A helical transmembrane segment spans residues 99–119 (LLIANLAISDFLVAIVCCPFE). Topologically, residues 120-146 (MDYYVVRQLSWEHGHVLCTSVNYLRTV) are extracellular. A disulfide bridge connects residues cysteine 137 and cysteine 217. A helical transmembrane segment spans residues 147–167 (SLYVSTNALLAIAIDRYLAIV). Residues 168–180 (HPLRPRMKCQTAT) lie on the Cytoplasmic side of the membrane. Residues 181–201 (GLIALVWTVSILIAIPSAYFT) form a helical membrane-spanning segment. The Extracellular portion of the chain corresponds to 202 to 232 (TETVLVIVKSQEKIFCGQIWPVDQQLYYKSY). A helical transmembrane segment spans residues 233–253 (FLFIFGIEFVGPVVTMTLCYA). The Cytoplasmic portion of the chain corresponds to 254–282 (RISRELWFKAVPGFQTEQIRKRLRCRRKT). A helical membrane pass occupies residues 283–303 (VLVLMCILTAYVLCWAPFYGF). At 304–322 (TIVRDFFPTVFVKEKHYLT) the chain is on the extracellular side. A helical transmembrane segment spans residues 323-343 (AFYIVECIAMSNSMINTLCFV). Over 344–393 (TVKNDTVKYFKKIMLLHWKASYNGGKSSADLDLKTIGMPATEEVDCIRLK) the chain is Cytoplasmic.

The protein belongs to the G-protein coupled receptor 1 family. As to expression, localizes to glandular epithelium, stroma and vascular endothelial cells of first trimester decidua (at protein level). Up-regulated in first trimester decidua when compared with non-pregnant endometrium. Expressed in the stomach, throughout the small intestine, colon, rectum, thyroid gland, pituitary gland, salivary gland, adrenal gland, testis, ovary, brain, spleen, prostate and pancreas.

The protein resides in the cell membrane. Receptor for prokineticin 1. Exclusively coupled to the G(q) subclass of heteromeric G proteins. Activation leads to mobilization of calcium, stimulation of phosphoinositide turnover and activation of p44/p42 mitogen-activated protein kinase. May play a role during early pregnancy. In Homo sapiens (Human), this protein is Prokineticin receptor 1 (PROKR1).